The sequence spans 705 residues: Pentatricopeptide repeat-containing protein At1g09410, mitochondrial (705 aa).

The transit peptide at 1 to 11 (MKSQILLRRTY) directs the protein to the mitochondrion. 15 PPR repeats span residues 16–46 (PPPT…CDSK), 47–77 (SISS…MPDR), 78–112 (NIIS…NVVS), 113–139 (WTAL…MPEK), 140–170 (NKVS…IPDK), 171–205 (DNIA…SVIT), 206–232 (WTTM…MPEK), 233–267 (TEVS…PVIA), 268–294 (CNAM…MKER), 295–329 (NDAS…GVRP), 330–364 (TFPT…QFDV), 365–395 (DVYV…FPSK), 396–430 (DIIM…GSTK), 432–462 (NEVT…MESV), and 468–498 (ITAH…MTVE). A type E motif region spans residues 503–578 (VWGSLLGACR…SPGCSWTEVE (76 aa)). Positions 579 to 610 (NKVHAFTRGGINSHPEQESILKILDELDGLLR) are type E(+) motif. The tract at residues 611–705 (EAGYNPDCSY…NGECSCKDYW (95 aa)) is type DYW motif.

It belongs to the PPR family. PCMP-H subfamily.

The protein resides in the mitochondrion. This chain is Pentatricopeptide repeat-containing protein At1g09410, mitochondrial (PCMP-H18), found in Arabidopsis thaliana (Mouse-ear cress).